The primary structure comprises 271 residues: UPF0328 protein ECU09_0020 (271 aa).

Belongs to the UPF0328 family.

This Encephalitozoon cuniculi (strain GB-M1) (Microsporidian parasite) protein is UPF0328 protein ECU09_0020.